The primary structure comprises 133 residues: ATP synthase epsilon chain (133 aa).

The protein belongs to the ATPase epsilon chain family. As to quaternary structure, F-type ATPases have 2 components, CF(1) - the catalytic core - and CF(0) - the membrane proton channel. CF(1) has five subunits: alpha(3), beta(3), gamma(1), delta(1), epsilon(1). CF(0) has three main subunits: a, b and c.

The protein localises to the cell inner membrane. Its function is as follows. Produces ATP from ADP in the presence of a proton gradient across the membrane. This Maricaulis maris (strain MCS10) (Caulobacter maris) protein is ATP synthase epsilon chain.